A 930-amino-acid chain; its full sequence is Isoleucine--tRNA ligase (930 aa).

A 'HIGH' region motif is present at residues 57–67 (PYANGNIHVGH). Glutamate 554 provides a ligand contact to L-isoleucyl-5'-AMP. Residues 595–599 (KMSKS) carry the 'KMSKS' region motif. Lysine 598 lines the ATP pocket. Zn(2+) is bound by residues cysteine 888, cysteine 891, cysteine 908, and cysteine 911.

This sequence belongs to the class-I aminoacyl-tRNA synthetase family. IleS type 1 subfamily. As to quaternary structure, monomer. The cofactor is Zn(2+).

Its subcellular location is the cytoplasm. It carries out the reaction tRNA(Ile) + L-isoleucine + ATP = L-isoleucyl-tRNA(Ile) + AMP + diphosphate. Its function is as follows. Catalyzes the attachment of isoleucine to tRNA(Ile). As IleRS can inadvertently accommodate and process structurally similar amino acids such as valine, to avoid such errors it has two additional distinct tRNA(Ile)-dependent editing activities. One activity is designated as 'pretransfer' editing and involves the hydrolysis of activated Val-AMP. The other activity is designated 'posttransfer' editing and involves deacylation of mischarged Val-tRNA(Ile). This Streptococcus pneumoniae serotype 19F (strain G54) protein is Isoleucine--tRNA ligase.